The following is a 140-amino-acid chain: 3-hydroxyacyl-[acyl-carrier-protein] dehydratase FabZ (140 aa).

The active site involves histidine 47.

It belongs to the thioester dehydratase family. FabZ subfamily.

The protein resides in the cytoplasm. The enzyme catalyses a (3R)-hydroxyacyl-[ACP] = a (2E)-enoyl-[ACP] + H2O. Involved in unsaturated fatty acids biosynthesis. Catalyzes the dehydration of short chain beta-hydroxyacyl-ACPs and long chain saturated and unsaturated beta-hydroxyacyl-ACPs. In Streptococcus agalactiae serotype III (strain NEM316), this protein is 3-hydroxyacyl-[acyl-carrier-protein] dehydratase FabZ.